The sequence spans 338 residues: Ketol-acid reductoisomerase (NADP(+)) (338 aa).

The 181-residue stretch at 1–181 (MKVFYDKDAD…GGGRAGIIET (181 aa)) folds into the KARI N-terminal Rossmann domain. NADP(+) is bound by residues 24–27 (YGSQ), arginine 47, and serine 52. Residue histidine 107 is part of the active site. Glycine 133 lines the NADP(+) pocket. The region spanning 182 to 327 (NFREETETDL…EKLRAMMPWI (146 aa)) is the KARI C-terminal knotted domain. Positions 190, 194, 226, and 230 each coordinate Mg(2+). Position 251 (serine 251) interacts with substrate.

Belongs to the ketol-acid reductoisomerase family. The cofactor is Mg(2+).

The enzyme catalyses (2R)-2,3-dihydroxy-3-methylbutanoate + NADP(+) = (2S)-2-acetolactate + NADPH + H(+). It catalyses the reaction (2R,3R)-2,3-dihydroxy-3-methylpentanoate + NADP(+) = (S)-2-ethyl-2-hydroxy-3-oxobutanoate + NADPH + H(+). The protein operates within amino-acid biosynthesis; L-isoleucine biosynthesis; L-isoleucine from 2-oxobutanoate: step 2/4. It participates in amino-acid biosynthesis; L-valine biosynthesis; L-valine from pyruvate: step 2/4. Its function is as follows. Involved in the biosynthesis of branched-chain amino acids (BCAA). Catalyzes an alkyl-migration followed by a ketol-acid reduction of (S)-2-acetolactate (S2AL) to yield (R)-2,3-dihydroxy-isovalerate. In the isomerase reaction, S2AL is rearranged via a Mg-dependent methyl migration to produce 3-hydroxy-3-methyl-2-ketobutyrate (HMKB). In the reductase reaction, this 2-ketoacid undergoes a metal-dependent reduction by NADPH to yield (R)-2,3-dihydroxy-isovalerate. The polypeptide is Ketol-acid reductoisomerase (NADP(+)) (Cupriavidus taiwanensis (strain DSM 17343 / BCRC 17206 / CCUG 44338 / CIP 107171 / LMG 19424 / R1) (Ralstonia taiwanensis (strain LMG 19424))).